The chain runs to 379 residues: Early boundary activity protein 3 (379 aa).

The heterotrimeric Elba complex consists of Elba1, Elba2 and Elba3.

It is found in the nucleus. In terms of biological role, the heterotrimeric Elba complex is required for chromatin domain boundary function during early embryogenesis. It binds to a 8-bp sequence 5'-CCAATAAG-3' in the Fab-7 insulator or boundary element in the bithorax complex and contributes to its insulator or boundary activity. Elba3 lacks DNA-binding activity and plays the role of an adapter protein, bringing Elba1 and 2 together, thereby establishing a complex that recognizes the asymmetric sequence motif through the BEN domains of Elba1 and 2. The chain is Early boundary activity protein 3 from Drosophila melanogaster (Fruit fly).